The primary structure comprises 130 residues: Small ribosomal subunit protein uS8 (130 aa).

This sequence belongs to the universal ribosomal protein uS8 family. In terms of assembly, part of the 30S ribosomal subunit. Contacts proteins S5 and S12.

Its function is as follows. One of the primary rRNA binding proteins, it binds directly to 16S rRNA central domain where it helps coordinate assembly of the platform of the 30S subunit. The chain is Small ribosomal subunit protein uS8 from Coxiella burnetii (strain Dugway 5J108-111).